A 474-amino-acid polypeptide reads, in one-letter code: Gasdermin-C (474 aa).

The tract at residues 1 to 237 (MLYTFDQVSK…TCAILLSANA (237 aa)) is triggers pyroptosis.

It belongs to the gasdermin family. In terms of assembly, homooligomer; homooligomeric ring-shaped pore complex containing 27-28 subunits when inserted in the membrane. In terms of processing, cleavage by CASP8 relieves autoinhibition by releasing the N-terminal moiety (Gasdermin-C, N-terminal) that initiates pyroptosis. Palmitoylated.

The protein localises to the cytoplasm. It localises to the cytosol. The protein resides in the cell membrane. Its activity is regulated as follows. The full-length protein before cleavage is inactive: intramolecular interactions between N- and C-terminal domains mediate autoinhibition in the absence of activation signal. The intrinsic pyroptosis-inducing activity is carried by the released N-terminal moiety (Gasdermin-C, N-terminal) following cleavage by caspase CASP8. This form constitutes the precursor of the pore-forming protein: upon cleavage, the released N-terminal moiety (Gasdermin-C, N-terminal) binds to membranes and forms pores, triggering pyroptosis. Its function is as follows. Pore-forming protein that causes membrane permeabilization and pyroptosis. Produced by the cleavage of gasdermin-C by caspase CASP8 in response to death signals. After cleavage, moves to the plasma membrane where it strongly binds to membrane inner leaflet lipids. Homooligomerizes within the membrane and forms pores of 10-15 nanometers (nm) of inner diameter, triggering pyroptosis. The protein is Gasdermin-C of Rattus norvegicus (Rat).